Here is a 1178-residue protein sequence, read N- to C-terminus: DNA-directed RNA polymerase subunit beta' (1178 aa).

Positions 60, 62, 75, and 78 each coordinate Zn(2+). Mg(2+) is bound by residues Asp450, Asp452, and Asp454. Residues Cys795, Cys869, Cys876, and Cys879 each contribute to the Zn(2+) site.

The protein belongs to the RNA polymerase beta' chain family. The RNAP catalytic core consists of 2 alpha, 1 beta, 1 beta' and 1 omega subunit. When a sigma factor is associated with the core the holoenzyme is formed, which can initiate transcription. The cofactor is Mg(2+). Requires Zn(2+) as cofactor.

It catalyses the reaction RNA(n) + a ribonucleoside 5'-triphosphate = RNA(n+1) + diphosphate. DNA-dependent RNA polymerase catalyzes the transcription of DNA into RNA using the four ribonucleoside triphosphates as substrates. This is DNA-directed RNA polymerase subunit beta' from Clostridium botulinum (strain ATCC 19397 / Type A).